A 294-amino-acid polypeptide reads, in one-letter code: Retinoic acid receptor responder protein 1 (294 aa).

Residues 1–20 are Lumenal-facing; sequence MQPRRQRLPAPWSGPRGPRP. A helical; Signal-anchor for type III membrane protein membrane pass occupies residues 21 to 42; the sequence is TAPLLALLLLLAPVAAPAGSGD. Cystatin LXN-type domains follow at residues 38-153 and 173-276; these read AGSG…EKKK and EIVS…TPEE. Ser-40 carries an O-linked (Xyl...) (chondroitin sulfate) serine glycan. At 43 to 294 the chain is on the cytoplasmic side; the sequence is PDDPGQPQDA…AVVPTELSNF (252 aa). Residues 273–294 are disordered; that stretch reads TPEEASGTEEGSAVVPTELSNF.

Belongs to the protease inhibitor I47 (latexin) family. In terms of assembly, interacts with AGBL2, KIF11 and MAPRE1. Post-translationally, not N-glycosylated. O-glycosylated; contains chondroitin sulfate. Detected in urine (at protein level).

The protein resides in the membrane. It is found in the secreted. Its function is as follows. Inhibitor of the cytoplasmic carboxypeptidase AGBL2, may regulate the alpha-tubulin tyrosination cycle. In Homo sapiens (Human), this protein is Retinoic acid receptor responder protein 1 (RARRES1).